Here is a 381-residue protein sequence, read N- to C-terminus: cAMP-dependent protein kinase type I-alpha regulatory subunit (381 aa).

Position 1 is an N-acetylmethionine (methionine 1). Alanine 2 carries the post-translational modification N-acetylalanine; in cAMP-dependent protein kinase type I-alpha regulatory subunit, N-terminally processed. Residues alanine 2–valine 136 form a dimerization and phosphorylation region. Serine 3 is subject to Phosphoserine. A disordered region spans residues isoleucine 73 to arginine 96. A Phosphothreonine modification is found at threonine 75. Phosphoserine is present on residues serine 77 and serine 83. Positions arginine 96 to isoleucine 100 match the Pseudophosphorylation motif motif. Serine 101 is modified (phosphoserine). 3',5'-cyclic AMP contacts are provided by residues leucine 137–serine 254, glutamate 202, arginine 211, isoleucine 255–valine 381, glutamate 326, and arginine 335. A Phosphoserine modification is found at serine 258.

Belongs to the cAMP-dependent kinase regulatory chain family. As to quaternary structure, the inactive holoenzyme is composed of two regulatory chains and two catalytic chains. Activation by cAMP releases the two active catalytic monomers and the regulatory dimer. Interacts with PRKACA and PRKACB. PRKAR1A also interacts with RFC2; the complex may be involved in cell survival. Interacts with AKAP4. Interacts with RARA; the interaction occurs in the presence of cAMP or FSH and regulates RARA transcriptional activity. Interacts with the phosphorylated form of PJA2. Interacts with PRKX; regulates this cAMP-dependent protein kinase. Interacts with CBFA2T3. Interacts with smAKAP; this interaction may target PRKAR1A to the plasma membrane. Interacts with AICDA. The pseudophosphorylation site binds to the substrate-binding region of the catalytic chain, resulting in the inhibition of its activity.

The protein resides in the cell membrane. In terms of biological role, regulatory subunit of the cAMP-dependent protein kinases involved in cAMP signaling in cells. The sequence is that of cAMP-dependent protein kinase type I-alpha regulatory subunit (Prkar1a) from Mus musculus (Mouse).